A 911-amino-acid chain; its full sequence is Protein translocase subunit SecA (911 aa).

Residues Gln87, 105-109, and Asp513 contribute to the ATP site; that span reads GEGKT. A disordered region spans residues 853 to 911; it reads IQLQHEQVSGLEPEAGEAPSAGEPRSEQPYVRAGRKVGRNDPCPCGSGKKFKACHGKLG. Low complexity predominate over residues 862–875; it reads GLEPEAGEAPSAGE. Zn(2+) is bound by residues Cys895, Cys897, Cys906, and His907. The segment covering 901–911 has biased composition (basic residues); sequence KKFKACHGKLG.

This sequence belongs to the SecA family. As to quaternary structure, monomer and homodimer. Part of the essential Sec protein translocation apparatus which comprises SecA, SecYEG and auxiliary proteins SecDF-YajC and YidC. It depends on Zn(2+) as a cofactor.

It is found in the cell inner membrane. The protein localises to the cytoplasm. It carries out the reaction ATP + H2O + cellular proteinSide 1 = ADP + phosphate + cellular proteinSide 2.. Part of the Sec protein translocase complex. Interacts with the SecYEG preprotein conducting channel. Has a central role in coupling the hydrolysis of ATP to the transfer of proteins into and across the cell membrane, serving both as a receptor for the preprotein-SecB complex and as an ATP-driven molecular motor driving the stepwise translocation of polypeptide chains across the membrane. In Teredinibacter turnerae (strain ATCC 39867 / T7901), this protein is Protein translocase subunit SecA.